A 421-amino-acid chain; its full sequence is MKRYDTLHVWKLIKLLICKFLLFHDFGTALFTSLVKASMLGFHNWRRTYWLYLKKLRPINDTYDAPFAIGCKNVAYEASQYPRMNATFMVLARNSDLDGVLSSMNSIERRFNRHFKYPYVFLNDEPFTTEFKKAVKDATDSSIQFGVLDDELWNFPKDVDKDMIDESIAEQVGVVYANFPSYHKMCRFFSRNFYKHPLMQQYEWYWRLEPEVTFSCDISYDPFYYMDKHNKVYGYVIAIKELAKTVPNLFRYTVAHQKISNLPTTDLWSFFLDKRYETRIKKLKEEQKDQGYYVLPEPPLNRIDGQIYNLCHFWSNFEIARLDFYNSKEYNEYVDALENAGGFWTERWGDAPVHSLAVGLLLNRSQVHYFRDLGYQHSTIQHCGQEYGCNCDCPFNIPDYETKPGSCINEWASVMGGFLDE.

Residue Glu318 is the Nucleophile of the active site.

Belongs to the glycosyltransferase 15 family.

It is found in the cytoplasm. Its function is as follows. Probable mannosyltransferase involved in O-glycosylation of cell wall and secreted proteins. The protein is O-glycoside alpha-1,2-mannosyltransferase homolog 5 (omh5) of Schizosaccharomyces pombe (strain 972 / ATCC 24843) (Fission yeast).